The primary structure comprises 299 residues: Probable lipid kinase YegS (299 aa).

Residues 2–133 enclose the DAGKc domain; the sequence is AEFPASLLIL…IDMAQVNKQT (132 aa). ATP-binding positions include threonine 40, 66–72, and threonine 95; that span reads GDGTINE. Residues leucine 215, aspartate 218, and leucine 220 each contribute to the Mg(2+) site. The active-site Proton acceptor is glutamate 271.

This sequence belongs to the diacylglycerol/lipid kinase family. YegS lipid kinase subfamily. The cofactor is Mg(2+). It depends on Ca(2+) as a cofactor.

The protein resides in the cytoplasm. Functionally, probably phosphorylates lipids; the in vivo substrate is unknown. The polypeptide is Probable lipid kinase YegS (Escherichia coli O127:H6 (strain E2348/69 / EPEC)).